A 628-amino-acid chain; its full sequence is MAIILLDTKTINRIAAGEVIERPASVVKELVENAIDAGSSEIEIKIESGGCNLITITDDGGGIEKSDLELAFMRHATSKLSDSELIEIKHLGFRGEALSSIAAVSRIKLSSKANGASEAWSISYEGGEKIGELIPYSLPQGTHIEVRDLFFATPNRLKFLKTERAEIQSIVDIVNNLAMINYSIGFTLTSGSKKPLKYAKQTSLFSRLCEVEEEFQDNSLEINEEEDGVRLTGHICKPTVNRGKSDMIYTFVNGRPIKDNLLVSAIRYAYHDFIPSNRYPFATLHLEIPYDQIDVNVHPNKSEVRFQNKRLIYEIVRRGLIKALSTRTGNSAVSNIDRSRCQGIGKETSGLPFDVSESQGNDNHINNGKSRETKSERELYERRPNPFENRLMKESNSPSVGKKDLSERSVLFDSGIQKSLSQAKTVVLEREQIDLIENHPLGFARCQVYNTYIIAEARGKLIIVDQHAAHERLVYECLKQKSSIKRQKLLLSEVVEIKNQAGMEMVEVYKDKLFEMGFDIQINSENKVIVKEIPAILGTIDVKEMLIDIVDRLMEIEDMLPIEDKVNKILATIACHGSIRAGRTMKLEEMNVLLRQMEETPYSGQCNHGRPTHIEMKLSDIEKLFERR.

Residues 350-402 are disordered; sequence GLPFDVSESQGNDNHINNGKSRETKSERELYERRPNPFENRLMKESNSPSVGK. The segment covering 356–368 has biased composition (polar residues); that stretch reads SESQGNDNHINNG. Over residues 369–393 the composition is skewed to basic and acidic residues; that stretch reads KSRETKSERELYERRPNPFENRLMK.

It belongs to the DNA mismatch repair MutL/HexB family.

Functionally, this protein is involved in the repair of mismatches in DNA. It is required for dam-dependent methyl-directed DNA mismatch repair. May act as a 'molecular matchmaker', a protein that promotes the formation of a stable complex between two or more DNA-binding proteins in an ATP-dependent manner without itself being part of a final effector complex. The protein is DNA mismatch repair protein MutL of Wolbachia sp. subsp. Brugia malayi (strain TRS).